Consider the following 60-residue polypeptide: Antimicrobial peptide Eval151 (60 aa).

The first 23 residues, Met1–Cys23, serve as a signal peptide directing secretion. Arginine amide is present on Arg36. A compositionally biased stretch (basic and acidic residues) spans Arg36–His54. A disordered region spans residues Arg36–Lys60. Positions Gly37 to Lys60 are excised as a propeptide.

Belongs to the non-disulfide-bridged peptide (NDBP) superfamily. As to expression, expressed by the venom gland.

It localises to the secreted. Its function is as follows. Probable antimicrobial peptide. Has no inhibitory activity against herpes simplex virus type 1 (HSV-1). This is Antimicrobial peptide Eval151 from Euscorpiops validus (Scorpion).